The following is a 425-amino-acid chain: tRNA(Ile)-lysidine synthase (425 aa).

27–32 (SGGLDS) contacts ATP.

It belongs to the tRNA(Ile)-lysidine synthase family.

The protein localises to the cytoplasm. The enzyme catalyses cytidine(34) in tRNA(Ile2) + L-lysine + ATP = lysidine(34) in tRNA(Ile2) + AMP + diphosphate + H(+). Ligates lysine onto the cytidine present at position 34 of the AUA codon-specific tRNA(Ile) that contains the anticodon CAU, in an ATP-dependent manner. Cytidine is converted to lysidine, thus changing the amino acid specificity of the tRNA from methionine to isoleucine. In Streptococcus pneumoniae (strain Hungary19A-6), this protein is tRNA(Ile)-lysidine synthase.